The chain runs to 86 residues: YcgL domain-containing protein XCV4171 (86 aa).

The YcgL domain maps to 1 to 83 (MHAYVYKSQR…PKTIVLAGEC (83 aa)).

In Xanthomonas euvesicatoria pv. vesicatoria (strain 85-10) (Xanthomonas campestris pv. vesicatoria), this protein is YcgL domain-containing protein XCV4171.